A 775-amino-acid polypeptide reads, in one-letter code: Subtilisin-like protease SBT3.8 (775 aa).

Positions 1–26 are cleaved as a signal peptide; the sequence is MKSCRTLIFVAIILNGLSTFVAHAGA. Residues 27 to 109 constitute a propeptide, activation peptide; the sequence is ESKVHIVYLG…VTPDSFYQLD (83 aa). The Inhibitor I9 domain occupies 30–108; it reads VHIVYLGEKQ…HVTPDSFYQL (79 aa). The region spanning 113 to 622 is the Peptidase S8 domain; that stretch reads TWDYLGLSVA…GGLVNPEKAA (510 aa). A glycan (N-linked (GlcNAc...) asparagine) is linked at Asn-129. The active-site Charge relay system is the Asp-143. Asn-174 and Asn-202 each carry an N-linked (GlcNAc...) asparagine glycan. Catalysis depends on His-218, which acts as the Charge relay system. The region spanning 384-476 is the PA domain; that stretch reads SLVYPENPGN…VDYELGTDIL (93 aa). N-linked (GlcNAc...) asparagine glycans are attached at residues Asn-395, Asn-410, and Asn-538. Ser-553 (charge relay system) is an active-site residue. N-linked (GlcNAc...) asparagine glycosylation is found at Asn-645, Asn-721, and Asn-756.

Belongs to the peptidase S8 family.

Its subcellular location is the secreted. The chain is Subtilisin-like protease SBT3.8 from Arabidopsis thaliana (Mouse-ear cress).